The sequence spans 310 residues: Protein FIP2 (310 aa).

The disordered stretch occupies residues 1–58 (MGFAPVTPAAVETYDPDVDHDDESNGLDGFRVRSKRSGKFSGGYSDSPREVGDGYGVR). Positions 14 to 25 (YDPDVDHDDESN) are enriched in acidic residues. Ser77 and Ser105 each carry phosphoserine. Disordered regions lie at residues 115-135 (ATRLRTHGKPSSGDFSHGSGG), 152-171 (FKPKNFSKPEPNFSQDLDYD), and 177-221 (DRAE…GSSS). Over residues 208-221 (PRNTGASNGYGSSS) the composition is skewed to polar residues.

In terms of assembly, interacts with FRI. Interacts with WAV3.

This Arabidopsis thaliana (Mouse-ear cress) protein is Protein FIP2.